The primary structure comprises 462 residues: Siroheme synthase (462 aa).

The interval 1-203 (MEYLPLFANL…GKWEHAEKEI (203 aa)) is precorrin-2 dehydrogenase /sirohydrochlorin ferrochelatase. Residues 22–23 (NV) and 43–44 (DD) contribute to the NAD(+) site. Residue serine 128 is modified to Phosphoserine. A uroporphyrinogen-III C-methyltransferase region spans residues 215-462 (GNVALVGAGP…NWFGKIIKEQ (248 aa)). Proline 224 is a binding site for S-adenosyl-L-methionine. The active-site Proton acceptor is the aspartate 247. Residue lysine 269 is the Proton donor of the active site. Residues 300–302 (GGD), isoleucine 305, 330–331 (TA), methionine 383, and glycine 412 each bind S-adenosyl-L-methionine.

The protein in the N-terminal section; belongs to the precorrin-2 dehydrogenase / sirohydrochlorin ferrochelatase family. In the C-terminal section; belongs to the precorrin methyltransferase family.

It catalyses the reaction uroporphyrinogen III + 2 S-adenosyl-L-methionine = precorrin-2 + 2 S-adenosyl-L-homocysteine + H(+). It carries out the reaction precorrin-2 + NAD(+) = sirohydrochlorin + NADH + 2 H(+). The catalysed reaction is siroheme + 2 H(+) = sirohydrochlorin + Fe(2+). Its pathway is cofactor biosynthesis; adenosylcobalamin biosynthesis; precorrin-2 from uroporphyrinogen III: step 1/1. The protein operates within cofactor biosynthesis; adenosylcobalamin biosynthesis; sirohydrochlorin from precorrin-2: step 1/1. It participates in porphyrin-containing compound metabolism; siroheme biosynthesis; precorrin-2 from uroporphyrinogen III: step 1/1. It functions in the pathway porphyrin-containing compound metabolism; siroheme biosynthesis; siroheme from sirohydrochlorin: step 1/1. Its pathway is porphyrin-containing compound metabolism; siroheme biosynthesis; sirohydrochlorin from precorrin-2: step 1/1. In terms of biological role, multifunctional enzyme that catalyzes the SAM-dependent methylations of uroporphyrinogen III at position C-2 and C-7 to form precorrin-2 via precorrin-1. Then it catalyzes the NAD-dependent ring dehydrogenation of precorrin-2 to yield sirohydrochlorin. Finally, it catalyzes the ferrochelation of sirohydrochlorin to yield siroheme. This is Siroheme synthase from Baumannia cicadellinicola subsp. Homalodisca coagulata.